Here is a 496-residue protein sequence, read N- to C-terminus: Alpha-amylase (496 aa).

Cysteine 29 and cysteine 85 form a disulfide bridge. Residues asparagine 99, arginine 155, and aspartate 164 each coordinate Ca(2+). Chloride is bound at residue arginine 192. The active-site Nucleophile is the aspartate 194. Histidine 198 contacts Ca(2+). Catalysis depends on glutamate 230, which acts as the Proton donor. Arginine 332 is a chloride binding site. 2 disulfides stabilise this stretch: cysteine 374/cysteine 380 and cysteine 448/cysteine 460.

Belongs to the glycosyl hydrolase 13 family. In terms of assembly, monomer. It depends on Ca(2+) as a cofactor. Chloride is required as a cofactor. Disulfide bonds are present.

It localises to the secreted. It catalyses the reaction Endohydrolysis of (1-&gt;4)-alpha-D-glucosidic linkages in polysaccharides containing three or more (1-&gt;4)-alpha-linked D-glucose units.. Inhibited by alpha-amylase inhibitors from wheat and rye. The most effective inhibitors are the wheat tetrameric alpha-amylase inhibitor (WTAI) and the rye dimeric alpha-amylase inhibitor (RDAI-1). Not inhibited by alpha-amylase inhibitor from barley. Aids in the digestion of starch and glycogen derived from food, such as skin scales, fungi and bacteria. This Dermatophagoides pteronyssinus (European house dust mite) protein is Alpha-amylase.